The primary structure comprises 297 residues: Dipicolinate synthase subunit A (297 aa).

NADP(+) contacts are provided by residues arginine 164 to threonine 165, arginine 185, threonine 203, leucine 242 to serine 244, and alanine 264 to leucine 267.

As to quaternary structure, dipicolinate synthase likely consists of DpaA and DpaB, since both proteins are required for DPA synthesis.

It catalyses the reaction (S)-2,3-dihydrodipicolinate + NADP(+) = dipicolinate + NADPH + H(+). In terms of biological role, together with DpaB, catalyzes the conversion of dihydrodipicolinate to dipicolinate (DPA), which constitutes up to 10% of the dry weight of the spore. In Bacillus subtilis (strain 168), this protein is Dipicolinate synthase subunit A (dpaA).